We begin with the raw amino-acid sequence, 45 residues long: Large ribosomal subunit protein bL34 (45 aa).

The interval 1–45 (MTKRTFGGTSRKRKRVSGFRVRMRSHTGRRVIKSRRQKGRERIAV) is disordered. Residues 10 to 39 (SRKRKRVSGFRVRMRSHTGRRVIKSRRQKG) are compositionally biased toward basic residues.

This sequence belongs to the bacterial ribosomal protein bL34 family.

The chain is Large ribosomal subunit protein bL34 from Prochlorococcus marinus (strain MIT 9301).